Consider the following 296-residue polypeptide: Probable GTP 3',8-cyclase (296 aa).

One can recognise a Radical SAM core domain in the interval 5 to 230 (EYGRVVTNLR…HRRTQYFTPK (226 aa)). R14 serves as a coordination point for GTP. C21 and C25 together coordinate [4Fe-4S] cluster. Y27 is a binding site for S-adenosyl-L-methionine. [4Fe-4S] cluster is bound at residue C28. GTP is bound at residue K61. G65 contributes to the S-adenosyl-L-methionine binding site. GTP is bound at residue T89. S113 is a binding site for S-adenosyl-L-methionine. Residue K150 participates in GTP binding. Residues C245 and C248 each contribute to the [4Fe-4S] cluster site. A GTP-binding site is contributed by 250–252 (RMR). A [4Fe-4S] cluster-binding site is contributed by C262.

Belongs to the radical SAM superfamily. MoaA family. The cofactor is [4Fe-4S] cluster.

It catalyses the reaction GTP + AH2 + S-adenosyl-L-methionine = (8S)-3',8-cyclo-7,8-dihydroguanosine 5'-triphosphate + 5'-deoxyadenosine + L-methionine + A + H(+). The protein operates within cofactor biosynthesis; molybdopterin biosynthesis. In terms of biological role, catalyzes the cyclization of GTP to (8S)-3',8-cyclo-7,8-dihydroguanosine 5'-triphosphate. The sequence is that of Probable GTP 3',8-cyclase from Archaeoglobus fulgidus (strain ATCC 49558 / DSM 4304 / JCM 9628 / NBRC 100126 / VC-16).